The primary structure comprises 192 residues: Small ribosomal subunit protein uS5 (192 aa).

The region spanning 20–83 (FVDKLVHINR…EAAKRGLIRV (64 aa)) is the S5 DRBM domain. The segment at 162-192 (SVAARRGLKVSALQARRRDADPADTSDAAVA) is disordered.

The protein belongs to the universal ribosomal protein uS5 family. As to quaternary structure, part of the 30S ribosomal subunit. Contacts proteins S4 and S8.

Its function is as follows. With S4 and S12 plays an important role in translational accuracy. Located at the back of the 30S subunit body where it stabilizes the conformation of the head with respect to the body. The chain is Small ribosomal subunit protein uS5 from Methylorubrum populi (strain ATCC BAA-705 / NCIMB 13946 / BJ001) (Methylobacterium populi).